A 411-amino-acid chain; its full sequence is Putative competence-damage inducible protein (411 aa).

It belongs to the CinA family.

This is Putative competence-damage inducible protein from Caldicellulosiruptor saccharolyticus (strain ATCC 43494 / DSM 8903 / Tp8T 6331).